We begin with the raw amino-acid sequence, 231 residues long: Large ribosomal subunit protein uL1 (231 aa).

This sequence belongs to the universal ribosomal protein uL1 family. In terms of assembly, part of the 50S ribosomal subunit.

In terms of biological role, binds directly to 23S rRNA. The L1 stalk is quite mobile in the ribosome, and is involved in E site tRNA release. Its function is as follows. Protein L1 is also a translational repressor protein, it controls the translation of the L11 operon by binding to its mRNA. The polypeptide is Large ribosomal subunit protein uL1 (Neisseria meningitidis serogroup A / serotype 4A (strain DSM 15465 / Z2491)).